The chain runs to 362 residues: Molybdenum import ATP-binding protein ModC (362 aa).

Residues 1 to 236 form the ABC transporter domain; the sequence is MTASGLYLNL…TQSPTAQGED (236 aa). An ATP-binding site is contributed by 36–43; the sequence is GPSGSGKT. The Mop domain occupies 297 to 362; it reads DSTILNKLAA…AQVKSVAIVG (66 aa).

Belongs to the ABC transporter superfamily. Molybdate importer (TC 3.A.1.8) family. As to quaternary structure, the complex is composed of two ATP-binding proteins (ModC), two transmembrane proteins (ModB) and a solute-binding protein (ModA).

It is found in the cell inner membrane. It carries out the reaction molybdate(out) + ATP + H2O = molybdate(in) + ADP + phosphate + H(+). Part of the ABC transporter complex ModABC involved in molybdenum import. Responsible for energy coupling to the transport system. This Saccharophagus degradans (strain 2-40 / ATCC 43961 / DSM 17024) protein is Molybdenum import ATP-binding protein ModC.